We begin with the raw amino-acid sequence, 23 residues long: Elongation factor Tu (23 aa).

It belongs to the GTP-binding elongation factor family. EF-Tu/EF-1A subfamily. As to quaternary structure, monomer. Post-translationally, the N-terminus is blocked. The C-terminus may be subjected to proteolysis.

It is found in the cytoplasm. Functionally, this protein promotes the GTP-dependent binding of aminoacyl-tRNA to the A-site of ribosomes during protein biosynthesis. The protein is Elongation factor Tu (tuf) of Delftia acidovorans (Pseudomonas acidovorans).